The primary structure comprises 253 residues: Large ribosomal subunit protein uL1m (253 aa).

A mitochondrion-targeting transit peptide spans 1 to 81 (MSSLIALGKR…SIALKSNRRA (81 aa)).

This sequence belongs to the universal ribosomal protein uL1 family. Component of the mitochondrial large ribosomal subunit (mt-LSU). Mature yeast 74S mitochondrial ribosomes consist of a small (37S) and a large (54S) subunit. The 37S small subunit contains a 15S ribosomal RNA (15S mt-rRNA) and at least 32 different proteins. The 54S large subunit contains a 21S rRNA (21S mt-rRNA) and at least 45 different proteins.

The protein localises to the mitochondrion. Functionally, component of the mitochondrial ribosome (mitoribosome), a dedicated translation machinery responsible for the synthesis of mitochondrial genome-encoded proteins, including at least some of the essential transmembrane subunits of the mitochondrial respiratory chain. The mitoribosomes are attached to the mitochondrial inner membrane and translation products are cotranslationally integrated into the membrane. This chain is Large ribosomal subunit protein uL1m (mrpl1), found in Schizosaccharomyces pombe (strain 972 / ATCC 24843) (Fission yeast).